We begin with the raw amino-acid sequence, 122 residues long: Phosphoribosyl-ATP pyrophosphatase (122 aa).

It belongs to the PRA-PH family.

It localises to the cytoplasm. The enzyme catalyses 1-(5-phospho-beta-D-ribosyl)-ATP + H2O = 1-(5-phospho-beta-D-ribosyl)-5'-AMP + diphosphate + H(+). It functions in the pathway amino-acid biosynthesis; L-histidine biosynthesis; L-histidine from 5-phospho-alpha-D-ribose 1-diphosphate: step 2/9. This chain is Phosphoribosyl-ATP pyrophosphatase, found in Cupriavidus metallidurans (strain ATCC 43123 / DSM 2839 / NBRC 102507 / CH34) (Ralstonia metallidurans).